The sequence spans 255 residues: MKIGVFDSGVGGFSVLKSLLKARLFDEIIYYGDSARVPYGTKDPTTIKQFGLEALDFFKPHEIELLIVACNTASALALEEMQKYSKIPIVGVIEPSILAIKRQVEDKNAPILVLGTKATIQSNAYDNALKQQGYLNISHLATSLFVPLIEESILEGELLETCMHYYFTPLEILPEVIILGCTHFPLIAQKIEGYFMGHFALPTPPLLIHSGDAIVEYLQQKYALKNNACTFPKVEFHASGDVIWLERQAKEWLKL.

Substrate is bound by residues 7 to 8 (DS) and 39 to 40 (YG). The Proton donor/acceptor role is filled by Cys-70. 71–72 (NT) serves as a coordination point for substrate. The Proton donor/acceptor role is filled by Cys-181. Residue 182–183 (TH) coordinates substrate.

It belongs to the aspartate/glutamate racemases family. In terms of assembly, homodimer.

The catalysed reaction is L-glutamate = D-glutamate. It participates in cell wall biogenesis; peptidoglycan biosynthesis. Functionally, provides the (R)-glutamate required for cell wall biosynthesis. The sequence is that of Glutamate racemase from Helicobacter pylori (strain J99 / ATCC 700824) (Campylobacter pylori J99).